A 920-amino-acid polypeptide reads, in one-letter code: Phosphoenolpyruvate carboxylase (920 aa).

Residues H138 and K583 contribute to the active site.

This sequence belongs to the PEPCase type 1 family. Mg(2+) serves as cofactor.

It carries out the reaction oxaloacetate + phosphate = phosphoenolpyruvate + hydrogencarbonate. Functionally, forms oxaloacetate, a four-carbon dicarboxylic acid source for the tricarboxylic acid cycle. In Streptococcus pyogenes serotype M1, this protein is Phosphoenolpyruvate carboxylase.